We begin with the raw amino-acid sequence, 2513 residues long: Highly reducing polyketide synthase ACRTS2 (2513 aa).

A Ketosynthase family 3 (KS3) domain is found at 4–429 (DTPVAIIGVS…GSSSAVIIDR (426 aa)). Active-site for beta-ketoacyl synthase activity residues include Cys174, His313, and His353. The tract at residues 547–875 (VFTGQGAQYA…NYLPSLLRGT (329 aa)) is malonyl-CoA:ACP transacylase (MAT) domain. Ser635 serves as the catalytic For malonyltransferase activity. The N-terminal hotdog fold stretch occupies residues 942 to 1074 (HALIGRKAPS…GKIEPEIADL (133 aa)). Residues 942–1253 (HALIGRKAPS…TFRTVSSADD (312 aa)) form a dehydratase (DH) domain region. One can recognise a PKS/mFAS DH domain in the interval 942–1254 (HALIGRKAPS…FRTVSSADDQ (313 aa)). The Proton acceptor; for dehydratase activity role is filled by His974. The interval 1092-1254 (AGVIEHDMDN…FRTVSSADDQ (163 aa)) is C-terminal hotdog fold. The Proton donor; for dehydratase activity role is filled by Asp1161. The tract at residues 1407-1600 (SKIIGYLTEN…IPTNYRTDNP (194 aa)) is methyltransferase (CMet) domain. The tract at residues 1816 to 2127 (GSPDTIYFRR…SRDHIGRLVV (312 aa)) is enoylreductase (ER) domain. The segment at 2152–2327 (ATYLVAGGTR…YTVSIGLPVV (176 aa)) is ketoreductase (KR) domain. A Carrier domain is found at 2433–2510 (DPLTGLIEAL…ALAVNILAQR (78 aa)). Ser2470 bears the O-(pantetheine 4'-phosphoryl)serine mark.

It participates in mycotoxin biosynthesis. Highly reducing polyketide synthase; part of the gene cluster that mediates the biosynthesis of the host-selective toxins (HSTs) ACR-toxins responsible for brown spot of rough lemon disease by the rough lemon pathotype. ACR-toxins cause uncoupling of mitochondrial oxidative-phosphorylation similar to that of classic protonophore. The structure of the major form of ACR-toxin (ACR-toxin I) consists of an alpha-dihydropyrone ring in a 19-carbon polyalcohol, a typical polyketide structure. Minor toxins were characterized as having a pyrone ring with polyalcohol side chains different in length and showing weaker toxicity. The highly reducing polyketide synthase ACRTS2 has all necessary enzymatic domains for multiple cycles of condensation and beta-keto processing. The cytochrome P450 monooxygenase ACRTS1 has also been shown to be essential for ACR-toxin biosynthesis, however its exact role in the pathway has not been elucidated yet. This is Highly reducing polyketide synthase ACRTS2 from Alternaria alternata (Alternaria rot fungus).